The chain runs to 29 residues: U20-ctenitoxin-Co1a (29 aa).

Cystine bridges form between C3–C16 and C10–C21.

As to expression, expressed by the venom gland.

It is found in the secreted. This chain is U20-ctenitoxin-Co1a, found in Ctenus ornatus (Brazilian spider).